The primary structure comprises 151 residues: MEATAPRRRHLLPLLLLLLLLCGECPPVSGCNEKRMLAMLPRCGKTFAEMMKKVEVWKWCNLSEFIVYYESFTNCTEVETNVVGCYWPNPLAQSFITGVHRRHFHNCSVDRQQWQDPPDEILIPLIVVPILLTLAMTGLVVWRSKRAAQVV.

Residues Met1 to Gly30 form the signal peptide. Residues Cys31 to Asp116 lie on the Extracellular side of the membrane. 2 cysteine pairs are disulfide-bonded: Cys43–Cys75 and Cys60–Cys107. 2 N-linked (GlcNAc...) asparagine glycosylation sites follow: Asn61 and Asn106. Residues Pro117 to Val141 traverse the membrane as a helical segment. The Cytoplasmic portion of the chain corresponds to Trp142–Val151.

Belongs to the RAMP family. As to quaternary structure, heterodimer of CALCRL and RAMP3; interaction induces allosteric modulation of CALCRL function and ligand specificity for adrenomedullin/ADM and intermedin/ADM2. Heterodimer of CALCR and RAMP3; interaction form the receptor complex AMYR3 for amylin/IAPP. Interacts with GPER1.

The protein localises to the cell membrane. The protein resides in the membrane. Accessory protein that interacts with and modulates the function of G-protein coupled receptors including calcitonin gene-related peptide type 1 receptor (CALCRL), calcitonin receptor (CALCR) and G-protein coupled estrogen receptor 1 (GPER1). Required for the transport of CALCRL and GPER1 receptors to the plasma membrane. Plays a role in cardioprotection by reducing cardiac hypertrophy and perivascular fibrosis in a GPER1-dependent manner. Together with CALCRL, form a receptor complex for adrenomedullin/ADM and intermedin/ADM2. Together with CALCR, act as a receptor complex for amylin/IAPP. This Sus scrofa (Pig) protein is Receptor activity-modifying protein 3 (RAMP3).